Here is a 104-residue protein sequence, read N- to C-terminus: MAIIPDKQDGTVLERQEKKLKPPSMYKVVLLNDDFTPMEFVVMIVQEYFNKDRETATQVMLKVHREGRGVCGVYTRDIASTKVEQVVTHARQAGHPLQCVMEEA.

This sequence belongs to the ClpS family. In terms of assembly, binds to the N-terminal domain of the chaperone ClpA.

In terms of biological role, involved in the modulation of the specificity of the ClpAP-mediated ATP-dependent protein degradation. The chain is ATP-dependent Clp protease adapter protein ClpS from Paraburkholderia xenovorans (strain LB400).